The sequence spans 242 residues: UPF0246 protein SP70585_1589 (242 aa).

This sequence belongs to the UPF0246 family.

In Streptococcus pneumoniae (strain 70585), this protein is UPF0246 protein SP70585_1589.